The sequence spans 169 residues: Small ribosomal subunit protein uS5 (169 aa).

The 64-residue stretch at 14 to 77 folds into the S5 DRBM domain; the sequence is LQEKVVEVRR…EDAKKNLIVV (64 aa).

This sequence belongs to the universal ribosomal protein uS5 family. In terms of assembly, part of the 30S ribosomal subunit. Contacts proteins S4 and S8.

With S4 and S12 plays an important role in translational accuracy. Functionally, located at the back of the 30S subunit body where it stabilizes the conformation of the head with respect to the body. This Clostridioides difficile (strain 630) (Peptoclostridium difficile) protein is Small ribosomal subunit protein uS5.